Reading from the N-terminus, the 510-residue chain is Outer spore wall protein 7 (510 aa).

An N-terminal signal peptide occupies residues 1–23 (MKAVFKVTTALLACVFIARYLVC). The segment at 167 to 195 (FETDSETEDYEDDENENEDEDEDEDEDDV) is disordered. A compositionally biased stretch (acidic residues) spans 169–195 (TDSETEDYEDDENENEDEDEDEDEDDV). Residue tyrosine 354 is modified to Phosphotyrosine.

Belongs to the OSW/SHE family.

In terms of biological role, involved in spore wall assembly. The polypeptide is Outer spore wall protein 7 (Saccharomyces cerevisiae (strain ATCC 204508 / S288c) (Baker's yeast)).